The chain runs to 159 residues: Large ribosomal subunit protein bL17 (159 aa).

Residues 124–135 show a composition bias toward low complexity; that stretch reads EANRATRAAASK. Residues 124–159 form a disordered region; sequence EANRATRAAASKQAEEAKAEEAEATEAEAEETTEEK. Acidic residues predominate over residues 145–159; that stretch reads AEATEAEAEETTEEK.

The protein belongs to the bacterial ribosomal protein bL17 family. As to quaternary structure, part of the 50S ribosomal subunit. Contacts protein L32.

The polypeptide is Large ribosomal subunit protein bL17 (Corynebacterium aurimucosum (strain ATCC 700975 / DSM 44827 / CIP 107346 / CN-1) (Corynebacterium nigricans)).